Consider the following 319-residue polypeptide: Acetyl-coenzyme A carboxylase carboxyl transferase subunit alpha (319 aa).

Positions R39–E293 constitute a CoA carboxyltransferase C-terminal domain.

This sequence belongs to the AccA family. Acetyl-CoA carboxylase is a heterohexamer composed of biotin carboxyl carrier protein (AccB), biotin carboxylase (AccC) and two subunits each of ACCase subunit alpha (AccA) and ACCase subunit beta (AccD).

It is found in the cytoplasm. The catalysed reaction is N(6)-carboxybiotinyl-L-lysyl-[protein] + acetyl-CoA = N(6)-biotinyl-L-lysyl-[protein] + malonyl-CoA. Its pathway is lipid metabolism; malonyl-CoA biosynthesis; malonyl-CoA from acetyl-CoA: step 1/1. Its function is as follows. Component of the acetyl coenzyme A carboxylase (ACC) complex. First, biotin carboxylase catalyzes the carboxylation of biotin on its carrier protein (BCCP) and then the CO(2) group is transferred by the carboxyltransferase to acetyl-CoA to form malonyl-CoA. This chain is Acetyl-coenzyme A carboxylase carboxyl transferase subunit alpha, found in Neisseria meningitidis serogroup A / serotype 4A (strain DSM 15465 / Z2491).